We begin with the raw amino-acid sequence, 231 residues long: 2-C-methyl-D-erythritol 4-phosphate cytidylyltransferase (231 aa).

The protein belongs to the IspD/TarI cytidylyltransferase family. IspD subfamily.

The catalysed reaction is 2-C-methyl-D-erythritol 4-phosphate + CTP + H(+) = 4-CDP-2-C-methyl-D-erythritol + diphosphate. It functions in the pathway isoprenoid biosynthesis; isopentenyl diphosphate biosynthesis via DXP pathway; isopentenyl diphosphate from 1-deoxy-D-xylulose 5-phosphate: step 2/6. In terms of biological role, catalyzes the formation of 4-diphosphocytidyl-2-C-methyl-D-erythritol from CTP and 2-C-methyl-D-erythritol 4-phosphate (MEP). This Lysinibacillus sphaericus (strain C3-41) protein is 2-C-methyl-D-erythritol 4-phosphate cytidylyltransferase.